A 209-amino-acid polypeptide reads, in one-letter code: Probable GTP-binding protein EngB (209 aa).

The EngB-type G domain occupies 24-198 (EGMEVAFAGR…HGILDQWLGL (175 aa)). GTP contacts are provided by residues 32-39 (GRSNAGKS), 59-63 (GRTQL), 77-80 (DLPG), 144-147 (TKAD), and 177-179 (FSA). Positions 39 and 61 each coordinate Mg(2+).

Belongs to the TRAFAC class TrmE-Era-EngA-EngB-Septin-like GTPase superfamily. EngB GTPase family. It depends on Mg(2+) as a cofactor.

Functionally, necessary for normal cell division and for the maintenance of normal septation. This Thioalkalivibrio sulfidiphilus (strain HL-EbGR7) protein is Probable GTP-binding protein EngB.